A 921-amino-acid polypeptide reads, in one-letter code: Protein translocase subunit SecA (921 aa).

ATP-binding positions include glutamine 87, 105 to 109, and aspartate 516; that span reads GEGKT. Cysteine 905, cysteine 907, cysteine 916, and histidine 917 together coordinate Zn(2+).

Belongs to the SecA family. In terms of assembly, monomer and homodimer. Part of the essential Sec protein translocation apparatus which comprises SecA, SecYEG and auxiliary proteins SecDF-YajC and YidC. Zn(2+) serves as cofactor.

It localises to the cell inner membrane. The protein localises to the cytoplasm. It carries out the reaction ATP + H2O + cellular proteinSide 1 = ADP + phosphate + cellular proteinSide 2.. Its function is as follows. Part of the Sec protein translocase complex. Interacts with the SecYEG preprotein conducting channel. Has a central role in coupling the hydrolysis of ATP to the transfer of proteins into and across the cell membrane, serving both as a receptor for the preprotein-SecB complex and as an ATP-driven molecular motor driving the stepwise translocation of polypeptide chains across the membrane. The polypeptide is Protein translocase subunit SecA (Polaromonas sp. (strain JS666 / ATCC BAA-500)).